The sequence spans 190 residues: UPF0232 protein SCO3875 (190 aa).

Disordered stretches follow at residues 1–70 (MSAD…GRDP) and 163–190 (GPGG…DTYG). Residues 26-35 (GVDLARVALR) show a composition bias toward low complexity. A compositionally biased stretch (basic and acidic residues) spans 36–45 (AAREAARARG). Gly residues predominate over residues 163 to 172 (GPGGPGGPGR).

The protein belongs to the UPF0232 family.

This chain is UPF0232 protein SCO3875, found in Streptomyces coelicolor (strain ATCC BAA-471 / A3(2) / M145).